Consider the following 111-residue polypeptide: UPF0122 protein CKR_1296 (111 aa).

The protein belongs to the UPF0122 family.

Its function is as follows. Might take part in the signal recognition particle (SRP) pathway. This is inferred from the conservation of its genetic proximity to ftsY/ffh. May be a regulatory protein. The polypeptide is UPF0122 protein CKR_1296 (Clostridium kluyveri (strain NBRC 12016)).